The following is a 986-amino-acid chain: Zinc finger protein 445 (986 aa).

One can recognise an SCAN box domain in the interval 52-134 (RQLFRQLRYH…ALLEELQRDL (83 aa)). A KRAB domain is found at 219–289 (LTFQDVEVTF…NICTVQLKRD (71 aa)). Residues lysine 302, lysine 360, and lysine 385 each participate in a glycyl lysine isopeptide (Lys-Gly) (interchain with G-Cter in SUMO2) cross-link. The disordered stretch occupies residues 433–460 (QNTGLKENGKDRYGETSRKSWHAHPEHR). Over residues 439-460 (ENGKDRYGETSRKSWHAHPEHR) the composition is skewed to basic and acidic residues. C2H2-type zinc fingers lie at residues 470–492 (FQCR…EKIH) and 498–520 (YQCS…QKTH). Lysine 524 participates in a covalent cross-link: Glycyl lysine isopeptide (Lys-Gly) (interchain with G-Cter in SUMO2). 2 C2H2-type zinc fingers span residues 553–575 (LHCN…QRIH) and 581–604 (YKCT…KLHH). Residue lysine 609 forms a Glycyl lysine isopeptide (Lys-Gly) (interchain with G-Cter in SUMO2) linkage. 2 consecutive C2H2-type zinc fingers follow at residues 634–656 (FPCQ…QRIH) and 662–686 (YQCS…RTQH). Lysine 691 participates in a covalent cross-link: Glycyl lysine isopeptide (Lys-Gly) (interchain with G-Cter in SUMO2). C2H2-type zinc fingers lie at residues 718-740 (NKCK…ERVH), 746-768 (YQCR…QRKH), 796-818 (FWCQ…KGIH), and 824-846 (FKCN…QRIH). A Glycyl lysine isopeptide (Lys-Gly) (interchain with G-Cter in SUMO2) cross-link involves residue lysine 929. 2 C2H2-type zinc fingers span residues 933–955 (HKCS…KRCH) and 961–983 (FKCI…MKNH).

It belongs to the krueppel C2H2-type zinc-finger protein family.

The protein resides in the nucleus. Its function is as follows. Transcription regulator required to maintain maternal and paternal gene imprinting, a process by which gene expression is restricted in a parent of origin-specific manner by epigenetic modification of genomic DNA and chromatin, including DNA methylation. Acts by controlling DNA methylation during the earliest multicellular stages of development at multiple imprinting control regions (ICRs). Acts together with ZFP57, but ZFP57 plays the predominant role in imprinting maintenance. In contrast, ZNF445 seems to be the major factor in human early embryonic imprinting maintenance. The polypeptide is Zinc finger protein 445 (Znf445) (Mus musculus (Mouse)).